We begin with the raw amino-acid sequence, 173 residues long: Crossover junction endodeoxyribonuclease RuvC (173 aa).

Residues Asp8, Glu67, and Asp139 contribute to the active site. Mg(2+)-binding residues include Asp8, Glu67, and Asp139.

It belongs to the RuvC family. As to quaternary structure, homodimer which binds Holliday junction (HJ) DNA. The HJ becomes 2-fold symmetrical on binding to RuvC with unstacked arms; it has a different conformation from HJ DNA in complex with RuvA. In the full resolvosome a probable DNA-RuvA(4)-RuvB(12)-RuvC(2) complex forms which resolves the HJ. Mg(2+) serves as cofactor.

It is found in the cytoplasm. It carries out the reaction Endonucleolytic cleavage at a junction such as a reciprocal single-stranded crossover between two homologous DNA duplexes (Holliday junction).. Functionally, the RuvA-RuvB-RuvC complex processes Holliday junction (HJ) DNA during genetic recombination and DNA repair. Endonuclease that resolves HJ intermediates. Cleaves cruciform DNA by making single-stranded nicks across the HJ at symmetrical positions within the homologous arms, yielding a 5'-phosphate and a 3'-hydroxyl group; requires a central core of homology in the junction. The consensus cleavage sequence is 5'-(A/T)TT(C/G)-3'. Cleavage occurs on the 3'-side of the TT dinucleotide at the point of strand exchange. HJ branch migration catalyzed by RuvA-RuvB allows RuvC to scan DNA until it finds its consensus sequence, where it cleaves and resolves the cruciform DNA. The sequence is that of Crossover junction endodeoxyribonuclease RuvC from Vibrio cholerae serotype O1 (strain ATCC 39541 / Classical Ogawa 395 / O395).